Here is a 137-residue protein sequence, read N- to C-terminus: Large-conductance mechanosensitive channel (137 aa).

Helical transmembrane passes span 9–29 and 79–99; these read AFAVKGNVVDMAVGIIIGAAF and IQTILDFVIVAFAIFMGVKAI.

Belongs to the MscL family. Homopentamer.

Its subcellular location is the cell inner membrane. In terms of biological role, channel that opens in response to stretch forces in the membrane lipid bilayer. May participate in the regulation of osmotic pressure changes within the cell. The polypeptide is Large-conductance mechanosensitive channel (Pseudomonas paraeruginosa (strain DSM 24068 / PA7) (Pseudomonas aeruginosa (strain PA7))).